A 359-amino-acid chain; its full sequence is Magnesium transporter NIPA2 (359 aa).

Residues 1–9 (MSLGRGKYD) lie on the Extracellular side of the membrane. A helical membrane pass occupies residues 10–30 (FYIGLGLAMTSSIFIGGSFIL). Over 31 to 56 (KKKGLLRLARKGSMRAGQGGHAYLKE) the chain is Cytoplasmic. The helical transmembrane segment at 57-77 (WLWWAGLLSMGAGEVANFAAY) threads the bilayer. A78 is a topological domain (extracellular). Residues 79–99 (FAPATLVTPLGALSVLVSAIL) traverse the membrane as a helical segment. The Cytoplasmic segment spans residues 100–107 (SSYFLNER). Residues 108–128 (LNLHGKIGCLLSILGSTVMVI) form a helical membrane-spanning segment. The Extracellular portion of the chain corresponds to 129–149 (HAPKEEEIETLNEMSHKLGDP). A helical membrane pass occupies residues 150–170 (GFVVFATFVVIVALIFIFVVG). At 171 to 175 (PRHGQ) the chain is on the cytoplasmic side. Residues 176–196 (TNILVYITICSVIGAFSVSCV) form a helical membrane-spanning segment. At 197–215 (KGLGIAIKELLAGKPVLQH) the chain is on the extracellular side. A helical transmembrane segment spans residues 216–236 (PLAWILLFSLVVCVSTQINYL). Residues 237–246 (NRALDIFNTS) are Cytoplasmic-facing. Residues 247–267 (IVTPIYYVFFTTSVLTCSAIL) traverse the membrane as a helical segment. Over 268-278 (FKEWQDMPVDD) the chain is Extracellular. A helical transmembrane segment spans residues 279 to 299 (VIGTLSGFFTIIVGIFLLHAF). At 300 to 359 (KDVSFSLASLPVSFRKDEKAMNGNLSSMYEVLNNNEDDLPCGIEHTGENISRRNGNLPSF) the chain is on the cytoplasmic side.

The protein belongs to the NIPA family. Widely expressed. Expressed at high levels in the kidney.

The protein resides in the cell membrane. The protein localises to the early endosome. The enzyme catalyses Mg(2+)(in) = Mg(2+)(out). Functionally, acts as a selective Mg(2+) transporter. The sequence is that of Magnesium transporter NIPA2 (Nipa2) from Mus musculus (Mouse).